The following is a 399-amino-acid chain: Centrosomal protein 43 (399 aa).

Positions 70 to 102 (DGRLVASLVAEFLQFFNLDFTLAVFQPETSTLQ) constitute a LisH domain. Disordered regions lie at residues 139-218 (EKGP…SSLH) and 232-308 (NRTL…SESK). Phosphothreonine is present on threonine 143. Residues serine 152, serine 156, and serine 160 each carry the phosphoserine modification. A compositionally biased stretch (polar residues) spans 163 to 172 (GKTSAQTTPS). Threonine 170 is modified (phosphothreonine). The span at 175–186 (PRYKGQGKKKTS) shows a compositional bias: basic residues. Serine 202 is subject to Phosphoserine. The segment covering 205–218 (SVSLSEPKSKSSLH) has biased composition (low complexity). A Phosphothreonine modification is found at threonine 234. A compositionally biased stretch (acidic residues) spans 245 to 256 (PDEDDMEGDSFF). Residues 259-275 (PIPKPEKTYGLRKEPRK) are compositionally biased toward basic and acidic residues. The span at 286-302 (APPLKSGLSSLAGAPSL) shows a compositional bias: low complexity. Residues serine 301 and serine 326 each carry the phosphoserine modification. The tract at residues 331 to 353 (TGEDDDYVDDFNSTSHRSEKSEI) is disordered. The residue at position 337 (tyrosine 337) is a Phosphotyrosine.

This sequence belongs to the CEP43 family. Homodimer. Part of a ternary complex that contains CEP350, CEP43 and MAPRE1. Interacts directly with CEP350 and MAPRE1. Interacts with CEP19. Interacts (via N-terminus) with CEP350 (via C-terminus). In terms of tissue distribution, ubiquitous. Highly expressed in heart, liver, muscle, kidney, intestine, colon, adrenal gland, prostate, testis, and pancreas.

The protein localises to the cytoplasm. It localises to the cytoskeleton. It is found in the microtubule organizing center. The protein resides in the centrosome. Its subcellular location is the centriole. The protein localises to the cilium basal body. Required for anchoring microtubules to the centrosomes. Required for ciliation. This Homo sapiens (Human) protein is Centrosomal protein 43.